We begin with the raw amino-acid sequence, 143 residues long: Cofilin (143 aa).

Residues 5–137 (GVAVADESLT…AYESVLEKVS (133 aa)) enclose the ADF-H domain.

Belongs to the actin-binding proteins ADF family.

It localises to the cytoplasm. The protein resides in the cytoskeleton. Its subcellular location is the nucleus matrix. Functionally, controls reversibly actin polymerization and depolymerization in a pH-sensitive manner. It has the ability to bind G- and F-actin in a 1:1 ratio of cofilin to actin. Binding to F-actin is regulated by tropomyosin. It is the major component of intranuclear and cytoplasmic actin rods. Required for accumulation of actin at the cell division site via depolymerizing actin at the cell ends. In association with myosin II has a role in the assembly of the contractile ring via severing actin filaments. Involved in the maintenance of the contractile ring once formed. In association with profilin and capping protein, has a role in the mitotic reorganization of the actin cytoskeleton. This chain is Cofilin (COF1), found in Eremothecium gossypii (strain ATCC 10895 / CBS 109.51 / FGSC 9923 / NRRL Y-1056) (Yeast).